The primary structure comprises 512 residues: Putative UDP-glucuronosyltransferase ugt-55 (512 aa).

An N-terminal signal peptide occupies residues 1-22 (MQLLTLPTLIFIFLNYGTPCLS). Residues 487-507 (ILLYLDSIAMFTLTLLTMILI) form a helical membrane-spanning segment.

Belongs to the UDP-glycosyltransferase family.

The protein resides in the membrane. It catalyses the reaction glucuronate acceptor + UDP-alpha-D-glucuronate = acceptor beta-D-glucuronoside + UDP + H(+). The chain is Putative UDP-glucuronosyltransferase ugt-55 (ugt-55) from Caenorhabditis elegans.